We begin with the raw amino-acid sequence, 101 residues long: Small ribosomal subunit protein uS14 (101 aa).

The protein belongs to the universal ribosomal protein uS14 family. In terms of assembly, part of the 30S ribosomal subunit. Contacts proteins S3 and S10.

Its function is as follows. Binds 16S rRNA, required for the assembly of 30S particles and may also be responsible for determining the conformation of the 16S rRNA at the A site. This is Small ribosomal subunit protein uS14 from Baumannia cicadellinicola subsp. Homalodisca coagulata.